A 159-amino-acid polypeptide reads, in one-letter code: 2-C-methyl-D-erythritol 2,4-cyclodiphosphate synthase (159 aa).

2 residues coordinate a divalent metal cation: aspartate 10 and histidine 12. Residues 10-12 (DVH) and 36-37 (HS) contribute to the 4-CDP-2-C-methyl-D-erythritol 2-phosphate site. Histidine 44 contacts a divalent metal cation. 4-CDP-2-C-methyl-D-erythritol 2-phosphate-binding positions include 58–60 (DIG), 63–67 (FPDTD), 102–108 (AQAPKMA), 134–137 (TTTE), phenylalanine 141, and arginine 144.

The protein belongs to the IspF family. Homotrimer. Requires a divalent metal cation as cofactor.

The enzyme catalyses 4-CDP-2-C-methyl-D-erythritol 2-phosphate = 2-C-methyl-D-erythritol 2,4-cyclic diphosphate + CMP. It participates in isoprenoid biosynthesis; isopentenyl diphosphate biosynthesis via DXP pathway; isopentenyl diphosphate from 1-deoxy-D-xylulose 5-phosphate: step 4/6. Its function is as follows. Involved in the biosynthesis of isopentenyl diphosphate (IPP) and dimethylallyl diphosphate (DMAPP), two major building blocks of isoprenoid compounds. Catalyzes the conversion of 4-diphosphocytidyl-2-C-methyl-D-erythritol 2-phosphate (CDP-ME2P) to 2-C-methyl-D-erythritol 2,4-cyclodiphosphate (ME-CPP) with a corresponding release of cytidine 5-monophosphate (CMP). In Shewanella sp. (strain ANA-3), this protein is 2-C-methyl-D-erythritol 2,4-cyclodiphosphate synthase.